The sequence spans 101 residues: Small ribosomal subunit protein uS14 (101 aa).

It belongs to the universal ribosomal protein uS14 family. In terms of assembly, part of the 30S ribosomal subunit. Contacts proteins S3 and S10.

In terms of biological role, binds 16S rRNA, required for the assembly of 30S particles and may also be responsible for determining the conformation of the 16S rRNA at the A site. The protein is Small ribosomal subunit protein uS14 of Paramagnetospirillum magneticum (strain ATCC 700264 / AMB-1) (Magnetospirillum magneticum).